The sequence spans 546 residues: Inosine-5'-monophosphate dehydrogenase (546 aa).

2 CBS domains span residues 135 to 197 (FILD…VTAI) and 198 to 254 (MSTD…PLAS). NAD(+)-binding positions include 292–294 (DSS) and 342–344 (GMG). K(+)-binding residues include glycine 344 and glycine 346. IMP is bound at residue serine 347. A K(+)-binding site is contributed by cysteine 349. Cysteine 349 acts as the Thioimidate intermediate in catalysis. IMP-binding positions include 382-384 (DGG), 405-406 (GG), and 430-434 (YRGMG). The Proton acceptor role is filled by arginine 460. Glutamine 472 is an IMP binding site. Residues glutamate 531 and glycine 532 each coordinate K(+).

The protein belongs to the IMPDH/GMPR family. Homotetramer. Requires K(+) as cofactor.

It is found in the cytoplasm. It catalyses the reaction IMP + NAD(+) + H2O = XMP + NADH + H(+). The protein operates within purine metabolism; XMP biosynthesis via de novo pathway; XMP from IMP: step 1/1. Mycophenolic acid (MPA) is a non-competitive inhibitor that prevents formation of the closed enzyme conformation by binding to the same site as the amobile flap. In contrast, mizoribine monophosphate (MZP) is a competitive inhibitor that induces the closed conformation. MPA is a potent inhibitor of mammalian IMPDHs but a poor inhibitor of the bacterial enzymes. MZP is a more potent inhibitor of bacterial IMPDH. Its function is as follows. Catalyzes the conversion of inosine 5'-phosphate (IMP) to xanthosine 5'-phosphate (XMP), the first committed and rate-limiting step in the de novo synthesis of guanine nucleotides, and therefore plays an important role in the regulation of cell growth. The chain is Inosine-5'-monophosphate dehydrogenase from Aspergillus fumigatus (strain ATCC MYA-4609 / CBS 101355 / FGSC A1100 / Af293) (Neosartorya fumigata).